Here is a 233-residue protein sequence, read N- to C-terminus: Ribosomal RNA small subunit methyltransferase G (233 aa).

Residues Gly91, Met96, 142-143 (VE), and Arg157 each bind S-adenosyl-L-methionine.

It belongs to the methyltransferase superfamily. RNA methyltransferase RsmG family.

It localises to the cytoplasm. The catalysed reaction is guanosine(527) in 16S rRNA + S-adenosyl-L-methionine = N(7)-methylguanosine(527) in 16S rRNA + S-adenosyl-L-homocysteine. In terms of biological role, specifically methylates the N7 position of guanine in position 527 of 16S rRNA. The sequence is that of Ribosomal RNA small subunit methyltransferase G from Cupriavidus necator (strain ATCC 17699 / DSM 428 / KCTC 22496 / NCIMB 10442 / H16 / Stanier 337) (Ralstonia eutropha).